The primary structure comprises 265 residues: Elongation factor 1-delta (265 aa).

Residues 31 to 54 (MGSASNKPHNSPQSAASALSNSGD) show a composition bias toward polar residues. 2 disordered regions span residues 31 to 64 (MGSASNKPHNSPQSAASALSNSGDGSELAARVAN) and 118 to 155 (KVQVTPAAKEENGTGEDDDDDDDIDLFGSDNEEEDAEA). The segment covering 130 to 153 (GTGEDDDDDDDIDLFGSDNEEEDA) has biased composition (acidic residues).

It belongs to the EF-1-beta/EF-1-delta family. As to quaternary structure, EF-1 is composed of 4 subunits: alpha, beta, delta, and gamma.

EF-1-beta and EF-1-delta stimulate the exchange of GDP bound to EF-1-alpha to GTP. This Xenopus laevis (African clawed frog) protein is Elongation factor 1-delta (eef1d).